The primary structure comprises 321 residues: Nucleotide-binding protein LI0459 (321 aa).

Residue 41-48 (GMSGAGKS) participates in ATP binding.

The protein belongs to the RapZ-like family.

In terms of biological role, displays ATPase and GTPase activities. This chain is Nucleotide-binding protein LI0459, found in Lawsonia intracellularis (strain PHE/MN1-00).